The chain runs to 198 residues: UPF0314 protein Atu8092 (198 aa).

Helical transmembrane passes span Leu-14–Met-34, Trp-64–Phe-84, and Val-150–Ile-170.

The protein belongs to the UPF0314 family.

The protein localises to the cell membrane. The sequence is that of UPF0314 protein Atu8092 from Agrobacterium fabrum (strain C58 / ATCC 33970) (Agrobacterium tumefaciens (strain C58)).